The sequence spans 276 residues: Tryptophan synthase alpha chain (276 aa).

Residues Glu46 and Glu57 each act as proton acceptor in the active site.

Belongs to the TrpA family. Tetramer of two alpha and two beta chains.

It catalyses the reaction (1S,2R)-1-C-(indol-3-yl)glycerol 3-phosphate + L-serine = D-glyceraldehyde 3-phosphate + L-tryptophan + H2O. Its pathway is amino-acid biosynthesis; L-tryptophan biosynthesis; L-tryptophan from chorismate: step 5/5. In terms of biological role, the alpha subunit is responsible for the aldol cleavage of indoleglycerol phosphate to indole and glyceraldehyde 3-phosphate. This is Tryptophan synthase alpha chain from Halobacterium salinarum (strain ATCC 29341 / DSM 671 / R1).